Reading from the N-terminus, the 85-residue chain is Neurotoxin 60.35 (85 aa).

The first 23 residues, 1–23 (MKFCVAVSLLIIASMAGVISVSG), serve as a signal peptide directing secretion. In terms of domain architecture, LCN-type CS-alpha/beta spans 24 to 85 (YDVYPRDYAG…NFLSVIWKQC (62 aa)). Intrachain disulfides connect cysteine 38–cysteine 60, cysteine 46–cysteine 65, and cysteine 50–cysteine 67.

This sequence belongs to the long (3 C-C) scorpion toxin superfamily. As to expression, expressed by the venom gland.

Its subcellular location is the secreted. The polypeptide is Neurotoxin 60.35 (Lychas mucronatus (Chinese swimming scorpion)).